The primary structure comprises 312 residues: Type II methyltransferase M.NgoMIV (312 aa).

An SAM-dependent MTase C5-type domain is found at phenylalanine 3–glutamate 311. Cysteine 74 is a catalytic residue.

It belongs to the class I-like SAM-binding methyltransferase superfamily. C5-methyltransferase family.

The catalysed reaction is a 2'-deoxycytidine in DNA + S-adenosyl-L-methionine = a 5-methyl-2'-deoxycytidine in DNA + S-adenosyl-L-homocysteine + H(+). Functionally, a methylase, recognizes the double-stranded sequence 5'-GCCGGC-3', methylates C-2 on both strands, and protects the DNA from cleavage by the NgoMIV endonuclease. The chain is Type II methyltransferase M.NgoMIV (ngoMIVM) from Neisseria gonorrhoeae.